The primary structure comprises 120 residues: Large ribosomal subunit protein bL19 (120 aa).

The protein belongs to the bacterial ribosomal protein bL19 family.

In terms of biological role, this protein is located at the 30S-50S ribosomal subunit interface and may play a role in the structure and function of the aminoacyl-tRNA binding site. The chain is Large ribosomal subunit protein bL19 from Cyanothece sp. (strain PCC 7425 / ATCC 29141).